The sequence spans 55 residues: ATP synthase protein 8 (55 aa).

Residues 7 to 24 (NPWLFIMLMSWLTFSLII) form a helical membrane-spanning segment. The disordered stretch occupies residues 35–55 (NPPSNKTPTTTKTSPWTWPWT). Positions 37–55 (PSNKTPTTTKTSPWTWPWT) are enriched in low complexity.

The protein belongs to the ATPase protein 8 family. F-type ATPases have 2 components, CF(1) - the catalytic core - and CF(0) - the membrane proton channel.

Its subcellular location is the mitochondrion membrane. In terms of biological role, mitochondrial membrane ATP synthase (F(1)F(0) ATP synthase or Complex V) produces ATP from ADP in the presence of a proton gradient across the membrane which is generated by electron transport complexes of the respiratory chain. F-type ATPases consist of two structural domains, F(1) - containing the extramembraneous catalytic core and F(0) - containing the membrane proton channel, linked together by a central stalk and a peripheral stalk. During catalysis, ATP synthesis in the catalytic domain of F(1) is coupled via a rotary mechanism of the central stalk subunits to proton translocation. Part of the complex F(0) domain. Minor subunit located with subunit a in the membrane. The protein is ATP synthase protein 8 (MT-ATP8) of Corythaeola cristata (Great blue turaco).